We begin with the raw amino-acid sequence, 638 residues long: 1-deoxy-D-xylulose-5-phosphate synthase (638 aa).

Residues His-79 and 120–122 (AHS) each bind thiamine diphosphate. Asp-151 contacts Mg(2+). Thiamine diphosphate is bound by residues 152-153 (GA), Asn-180, Tyr-289, and Glu-371. Asn-180 serves as a coordination point for Mg(2+).

The protein belongs to the transketolase family. DXPS subfamily. In terms of assembly, homodimer. The cofactor is Mg(2+). It depends on thiamine diphosphate as a cofactor.

It catalyses the reaction D-glyceraldehyde 3-phosphate + pyruvate + H(+) = 1-deoxy-D-xylulose 5-phosphate + CO2. The protein operates within metabolic intermediate biosynthesis; 1-deoxy-D-xylulose 5-phosphate biosynthesis; 1-deoxy-D-xylulose 5-phosphate from D-glyceraldehyde 3-phosphate and pyruvate: step 1/1. In terms of biological role, catalyzes the acyloin condensation reaction between C atoms 2 and 3 of pyruvate and glyceraldehyde 3-phosphate to yield 1-deoxy-D-xylulose-5-phosphate (DXP). This Rhizobium rhizogenes (strain K84 / ATCC BAA-868) (Agrobacterium radiobacter) protein is 1-deoxy-D-xylulose-5-phosphate synthase.